The chain runs to 339 residues: Aspartate carbamoyltransferase catalytic subunit (339 aa).

Carbamoyl phosphate-binding residues include R69 and T70. K97 provides a ligand contact to L-aspartate. Carbamoyl phosphate contacts are provided by R119, H149, and Q152. The L-aspartate site is built by R182 and R237. Carbamoyl phosphate is bound by residues G278 and P279.

The protein belongs to the aspartate/ornithine carbamoyltransferase superfamily. ATCase family. In terms of assembly, heterododecamer (2C3:3R2) of six catalytic PyrB chains organized as two trimers (C3), and six regulatory PyrI chains organized as three dimers (R2).

The catalysed reaction is carbamoyl phosphate + L-aspartate = N-carbamoyl-L-aspartate + phosphate + H(+). The protein operates within pyrimidine metabolism; UMP biosynthesis via de novo pathway; (S)-dihydroorotate from bicarbonate: step 2/3. Catalyzes the condensation of carbamoyl phosphate and aspartate to form carbamoyl aspartate and inorganic phosphate, the committed step in the de novo pyrimidine nucleotide biosynthesis pathway. The chain is Aspartate carbamoyltransferase catalytic subunit from Hydrogenovibrio crunogenus (strain DSM 25203 / XCL-2) (Thiomicrospira crunogena).